The chain runs to 94 residues: Ig kappa-B5 chain V region 2699 (94 aa).

The segment at 1 to 23 (AFELTQTPSSVEAAVGGTVTINC) is framework-1. The interval 24–34 (QASTDISSNLA) is complementarity-determining-1. The tract at residues 35 to 49 (WYTPKPGSPPKLLIY) is framework-2. The tract at residues 50–56 (SASTLAS) is complementarity-determining-2. Residues 57–82 (GVSSRFKGSGSGVLITLTISDLECGV) form a framework-3 region. Residue serine 83 is a region of interest, complementarity-determining-3. The framework-4 stretch occupies residues 84-93 (FGGGTKVVVE).

In Oryctolagus cuniculus (Rabbit), this protein is Ig kappa-B5 chain V region 2699.